Consider the following 574-residue polypeptide: MATRAPLAPPPNETEASVSRITREGKKLTYKLNVMQQPERARACGAGAKSSADRRPVDPPPVVELRVYESDPNDDLNKTDITFAYNANFFLYATLETARPMAQGRFAPNPTCPVLTGVPVAGVAYLDRPSQAGYFIFPDLSVRHEGVYRLNFHLYEETKESKDANENAPIQSLSNPMPSKPMAPKSFLEFRLEVVSVPFTVFSAKKFPGLATSTSLSRVIAEQGCRVRIRRDVRMRRRGEKRTDDYDYDEERVYRSSDRISTPDTHGYAGTPVERPRSTSTSTVDPSFPYGVDAQRRSSGATEYGFQGAQPYQRPLPPAPGPAPAAVSTPAPPAPPAPPSHNPGYQSHLSFGSTQTQYPAPQLPPTPQTASTLAAPYSPHPSYSHARNPSTSAEYETPGYSYPPSRMSTERSSYPKNGLPPLRLEPPKPLNMPSGEPRSSDPNAYHSVAQSAAPRSQTPSSSLVPSLPPLKALSGDYPNNLSQSSSSTSQSPSHDLGAGKKFFWDTGASLSKRSYEDSFGHDDRPLYNGMRPDTESYPRRLSDASRNFYNETRDEMAYKRANGRMATKISPALQ.

Disordered regions lie at residues 1–22 (MATR…SRIT), 39–60 (ERAR…VDPP), 255–500 (RSSD…GAGK), and 513–540 (RSYE…YPRR). The region spanning 25–230 (GKKLTYKLNV…AEQGCRVRIR (206 aa)) is the Velvet domain. The Nuclear localization signal signature appears at 39-44 (ERARAC). 2 stretches are compositionally biased toward pro residues: residues 314-323 (RPLPPAPGPA) and 330-341 (PAPPAPPAPPSH). Composition is skewed to polar residues over residues 343–353 (PGYQSHLSFGS), 385–394 (HARNPSTSAE), 406–415 (RMSTERSSYP), and 448–458 (VAQSAAPRSQT). Residues 457–501 (QTPSSSLVPSLPPLKALSGDYPNNLSQSSSSTSQSPSHDLGAGKK) form a PEST region. 2 stretches are compositionally biased toward low complexity: residues 459-474 (PSSS…KALS) and 482-493 (SQSSSSTSQSPS). Positions 513–525 (RSYEDSFGHDDRP) are enriched in basic and acidic residues.

It belongs to the velvet family. VeA subfamily. Component of the heterotrimeric velvet complex composed of laeA, veA and velB; VeA acting as a bridging protein between laeA and velB.

The protein localises to the nucleus. Its subcellular location is the cytoplasm. Component of the velvet transcription factor complex that controls sexual/asexual developmental ratio in response to light, promoting sexual development in the darkness while stimulating asexual sporulation under illumination. The velvet complex hat acts as a global regulator for secondary metabolite gene expression. Controls the expression of the penicillin gene cluster. The protein is Developmental and secondary metabolism regulator veA of Aspergillus oryzae (strain ATCC 42149 / RIB 40) (Yellow koji mold).